Consider the following 209-residue polypeptide: N-acetyltransferase aca1 (209 aa).

In terms of domain architecture, N-acetyltransferase spans 26–202; the sequence is TNVKNKEELL…DAYIYQYHFP (177 aa). N118 lines the substrate pocket. 128–133 contributes to the CoA binding site; the sequence is RSKGIG. 155-156 lines the substrate pocket; sequence NL.

It belongs to the acetyltransferase family. Homodimer.

The protein resides in the cytoplasm. The protein localises to the mitochondrion. It carries out the reaction L-glutamate 5-semialdehyde + acetyl-CoA = N-acetyl-L-glutamate 5-semialdehyde + CoA + H(+). Functionally, N-acetyltransferase involved in oxidative stress resistance. Acetylates the toxic proline metabolism intermediate (S)-1-pyrroline-5-carboxylate (P5C), or more likely its spontaneously forming tautomer glutamate-5-semialdehyde (GSA) into N-acetyl-GSA for arginine synthesis in the mitochondria. P5C has been shown to increase the levels of reactive oxygen species (ROS) in the cell by inhibiting the function of the respiratory chain in the mitochondria. The enzyme is able to reduce intracellular ROS levels under P5C-induced oxidative stress and protects cells from damage by oxidative stress. Also acetylates and thereby detoxifies the proline analog azetidine-2-carboxylate (AZC), however it is unlikely that AZC is a natural substrate as it occurs only in plants belonging to the Lilaceae family. The sequence is that of N-acetyltransferase aca1 from Schizosaccharomyces pombe (strain 972 / ATCC 24843) (Fission yeast).